Here is a 504-residue protein sequence, read N- to C-terminus: Cytochrome P450 3A16 (504 aa).

Cysteine 443 is a binding site for heme.

It belongs to the cytochrome P450 family. Heme serves as cofactor.

It is found in the endoplasmic reticulum membrane. The protein resides in the microsome membrane. It catalyses the reaction an organic molecule + reduced [NADPH--hemoprotein reductase] + O2 = an alcohol + oxidized [NADPH--hemoprotein reductase] + H2O + H(+). In terms of biological role, cytochromes P450 are a group of heme-thiolate monooxygenases. In liver microsomes, this enzyme is involved in an NADPH-dependent electron transport pathway. It oxidizes a variety of structurally unrelated compounds, including steroids, fatty acids, and xenobiotics. This is Cytochrome P450 3A16 (Cyp3a16) from Mus musculus (Mouse).